The following is a 370-amino-acid chain: Queuine tRNA-ribosyltransferase (370 aa).

The active-site Proton acceptor is the Asp-89. Substrate-binding positions include 89–93, Asp-143, Gln-185, and Gly-212; that span reads DSGGF. The tract at residues 243-249 is RNA binding; the sequence is GVGKPED. Residue Asp-262 is the Nucleophile of the active site. An RNA binding; important for wobble base 34 recognition region spans residues 267–271; it reads TRNAR. Residues Cys-300, Cys-302, Cys-305, and His-331 each coordinate Zn(2+).

This sequence belongs to the queuine tRNA-ribosyltransferase family. As to quaternary structure, homodimer. Within each dimer, one monomer is responsible for RNA recognition and catalysis, while the other monomer binds to the replacement base PreQ1. Requires Zn(2+) as cofactor.

The catalysed reaction is 7-aminomethyl-7-carbaguanine + guanosine(34) in tRNA = 7-aminomethyl-7-carbaguanosine(34) in tRNA + guanine. It functions in the pathway tRNA modification; tRNA-queuosine biosynthesis. Functionally, catalyzes the base-exchange of a guanine (G) residue with the queuine precursor 7-aminomethyl-7-deazaguanine (PreQ1) at position 34 (anticodon wobble position) in tRNAs with GU(N) anticodons (tRNA-Asp, -Asn, -His and -Tyr). Catalysis occurs through a double-displacement mechanism. The nucleophile active site attacks the C1' of nucleotide 34 to detach the guanine base from the RNA, forming a covalent enzyme-RNA intermediate. The proton acceptor active site deprotonates the incoming PreQ1, allowing a nucleophilic attack on the C1' of the ribose to form the product. After dissociation, two additional enzymatic reactions on the tRNA convert PreQ1 to queuine (Q), resulting in the hypermodified nucleoside queuosine (7-(((4,5-cis-dihydroxy-2-cyclopenten-1-yl)amino)methyl)-7-deazaguanosine). This chain is Queuine tRNA-ribosyltransferase, found in Pseudoalteromonas atlantica (strain T6c / ATCC BAA-1087).